The following is an 89-amino-acid chain: Putative regulatory protein Dalk_1931 (89 aa).

It belongs to the RemA family.

The chain is Putative regulatory protein Dalk_1931 from Desulfatibacillum aliphaticivorans.